Reading from the N-terminus, the 509-residue chain is Cobyric acid synthase (509 aa).

The region spanning 262–459 (EIKVGIIKLP…IHGIFENDIW (198 aa)) is the GATase cobBQ-type domain. Cys343 (nucleophile) is an active-site residue. His451 is a catalytic residue.

It belongs to the CobB/CobQ family. CobQ subfamily.

It participates in cofactor biosynthesis; adenosylcobalamin biosynthesis. Functionally, catalyzes amidations at positions B, D, E, and G on adenosylcobyrinic A,C-diamide. NH(2) groups are provided by glutamine, and one molecule of ATP is hydrogenolyzed for each amidation. This chain is Cobyric acid synthase, found in Prochlorococcus marinus (strain MIT 9312).